Reading from the N-terminus, the 110-residue chain is Large ribosomal subunit protein uL22 (110 aa).

The protein belongs to the universal ribosomal protein uL22 family. Part of the 50S ribosomal subunit.

In terms of biological role, this protein binds specifically to 23S rRNA; its binding is stimulated by other ribosomal proteins, e.g. L4, L17, and L20. It is important during the early stages of 50S assembly. It makes multiple contacts with different domains of the 23S rRNA in the assembled 50S subunit and ribosome. The globular domain of the protein is located near the polypeptide exit tunnel on the outside of the subunit, while an extended beta-hairpin is found that lines the wall of the exit tunnel in the center of the 70S ribosome. This chain is Large ribosomal subunit protein uL22, found in Chromohalobacter salexigens (strain ATCC BAA-138 / DSM 3043 / CIP 106854 / NCIMB 13768 / 1H11).